A 540-amino-acid chain; its full sequence is 2-succinyl-5-enolpyruvyl-6-hydroxy-3-cyclohexene-1-carboxylate synthase (540 aa).

It belongs to the TPP enzyme family. MenD subfamily. As to quaternary structure, homodimer. The cofactor is Mg(2+). Mn(2+) is required as a cofactor. Requires thiamine diphosphate as cofactor.

The catalysed reaction is isochorismate + 2-oxoglutarate + H(+) = 5-enolpyruvoyl-6-hydroxy-2-succinyl-cyclohex-3-ene-1-carboxylate + CO2. Its pathway is quinol/quinone metabolism; 1,4-dihydroxy-2-naphthoate biosynthesis; 1,4-dihydroxy-2-naphthoate from chorismate: step 2/7. It participates in quinol/quinone metabolism; menaquinone biosynthesis. In terms of biological role, catalyzes the thiamine diphosphate-dependent decarboxylation of 2-oxoglutarate and the subsequent addition of the resulting succinic semialdehyde-thiamine pyrophosphate anion to isochorismate to yield 2-succinyl-5-enolpyruvyl-6-hydroxy-3-cyclohexene-1-carboxylate (SEPHCHC). The protein is 2-succinyl-5-enolpyruvyl-6-hydroxy-3-cyclohexene-1-carboxylate synthase of Mycobacteroides abscessus (strain ATCC 19977 / DSM 44196 / CCUG 20993 / CIP 104536 / JCM 13569 / NCTC 13031 / TMC 1543 / L948) (Mycobacterium abscessus).